The sequence spans 144 residues: uncharacterized protein (144 aa).

The disordered stretch occupies residues 1-24; it reads MGKVIQFPFGEEPEKKEEKELKTE. A compositionally biased stretch (basic and acidic residues) spans 12 to 24; it reads EPEKKEEKELKTE.

This is an uncharacterized protein from Aquifex aeolicus (strain VF5).